Here is a 64-residue protein sequence, read N- to C-terminus: Large ribosomal subunit protein uL29 (64 aa).

It belongs to the universal ribosomal protein uL29 family.

The chain is Large ribosomal subunit protein uL29 from Nitratiruptor sp. (strain SB155-2).